Reading from the N-terminus, the 140-residue chain is Large ribosomal subunit protein uL11 (140 aa).

This sequence belongs to the universal ribosomal protein uL11 family. Part of the ribosomal stalk of the 50S ribosomal subunit. Interacts with L10 and the large rRNA to form the base of the stalk. L10 forms an elongated spine to which L12 dimers bind in a sequential fashion forming a multimeric L10(L12)X complex. In terms of processing, one or more lysine residues are methylated.

Functionally, forms part of the ribosomal stalk which helps the ribosome interact with GTP-bound translation factors. The protein is Large ribosomal subunit protein uL11 of Staphylococcus carnosus (strain TM300).